A 682-amino-acid chain; its full sequence is Probable potassium transport system protein Kup (682 aa).

12 helical membrane passes run 13–33 (GLLV…LYVM), 55–75 (ISLI…LIAL), 98–118 (WLVI…TLTP), 138–158 (IPVP…LFLF), 171–191 (TFGP…IMNL), 217–237 (VGVL…ALYS), 250–270 (SWPY…VWIL), 295–315 (FFAI…LITG), 344–364 (LFIP…VFLF), 375–395 (GLAI…YLSL), 405–425 (VFLL…LAKF), and 428–448 (GGYV…IWYF).

The protein belongs to the HAK/KUP transporter (TC 2.A.72) family.

The protein localises to the cell membrane. It carries out the reaction K(+)(in) + H(+)(in) = K(+)(out) + H(+)(out). Its function is as follows. Transport of potassium into the cell. Likely operates as a K(+):H(+) symporter. In Lactobacillus gasseri (strain ATCC 33323 / DSM 20243 / BCRC 14619 / CIP 102991 / JCM 1131 / KCTC 3163 / NCIMB 11718 / NCTC 13722 / AM63), this protein is Probable potassium transport system protein Kup.